The chain runs to 139 residues: Basic phospholipase A2 beta-bungarotoxin A2 chain (139 aa).

The first 9 residues, 1–9 (AVCVSLLGA), serve as a signal peptide directing secretion. Residues 10 to 17 (ANIPPHPF) constitute a propeptide that is removed on maturation. Residues Tyr45, Gly47, and Gly49 each coordinate Ca(2+). Cys46 and Cys62 are joined by a disulfide. His65 is a catalytic residue. Asp66 is a binding site for Ca(2+).

The protein belongs to the phospholipase A2 family. Group I subfamily. D49 sub-subfamily. In terms of assembly, heterodimer; disulfide-linked. The A chains have phospholipase A2 activity and the B chains show homology with the basic protease inhibitors. Requires Ca(2+) as cofactor. In terms of tissue distribution, expressed by the venom gland.

The protein resides in the secreted. It catalyses the reaction a 1,2-diacyl-sn-glycero-3-phosphocholine + H2O = a 1-acyl-sn-glycero-3-phosphocholine + a fatty acid + H(+). Its function is as follows. Snake venom phospholipase A2 (PLA2) that shows presynaptic neurotoxicity. PLA2 catalyzes the calcium-dependent hydrolysis of the 2-acyl groups in 3-sn-phosphoglycerides. In Bungarus candidus (Malayan krait), this protein is Basic phospholipase A2 beta-bungarotoxin A2 chain.